The primary structure comprises 668 residues: MSLADLTKTNVDEQFSSVALENNRRSAECKRSPGTGDFSRNSSASAKSVDYSRSQCSCGSLSSQYDYSEDFLCDCSEKAINRNYLKQPVVKEKEKKKYNVSKISQSKGQKEISVEKKHTWNASLFNSQIHMIAQRRDAMAHRILSARLHKIKGLKNELADMHHKLEAILTENQFLKQLQLRHLKAIGKYENSQNNLPQIMAKHQNEVKNLRQLLRKSQEKERTVSRKLRETDSQLLKTKDTLQALQKLSEDKNLAEREELTHKLSIITTKMEANDKKIQSLEKQLRLNSRVFSRQLAIETRKTLAAQTATKTLQVEVKHLQQKLKEKDRELEIKNIYSHRILKNLHDTEDYPKVSSTKSVQADRKSLPFTSMRHQGTQKSDVPPLTTKGKKATGNMNHKEKSTEINREIPHCVNKLPKQEDSKTKYEDLSREEKHLEVQVLLENTGRQKDKKEDQEKKTIFVKEEQELPPKIIEVIHPERESTQEDVLVREKFKRSMQRNGMDDTPDKCTAPYTKGPLRQRRHYSFTEATENLHHGLPASGGPANAGNTKYSHSTSKHLSNREEMELEHSDSGYEPSFGKSSRIKVKDTTFRDKKSSLMEELFGSGYVLKTDQSSPGVAKGSEEPLQSKESHPPSQASASNAFGDSKVTVVNSIKPSSPTEGKRKIII.

Residues 17–44 (SVALENNRRSAECKRSPGTGDFSRNSSA) are disordered. Positions 22–31 (NNRRSAECKR) are enriched in basic and acidic residues. Coiled-coil stretches lie at residues 148 to 259 (LHKI…EREE) and 305 to 336 (AAQTATKTLQVEVKHLQQKLKEKDRELEIKNI). Residues 351-402 (YPKVSSTKSVQADRKSLPFTSMRHQGTQKSDVPPLTTKGKKATGNMNHKEKS) are disordered. A compositionally biased stretch (polar residues) spans 368–380 (PFTSMRHQGTQKS). A coiled-coil region spans residues 420-440 (EDSKTKYEDLSREEKHLEVQV). Disordered regions lie at residues 495–520 (RSMQRNGMDDTPDKCTAPYTKGPLRQ), 533–581 (LHHG…FGKS), and 605–668 (SGYV…KIII). Residues 546–558 (AGNTKYSHSTSKH) show a composition bias toward polar residues. Basic and acidic residues-rich tracts occupy residues 560-572 (SNREEMELEHSDS) and 621-632 (GSEEPLQSKESH). Residues 633–660 (PPSQASASNAFGDSKVTVVNSIKPSSPT) show a composition bias toward polar residues.

It belongs to the LCA5 family.

This chain is Lebercilin-like protein, found in Macaca fascicularis (Crab-eating macaque).